The following is a 309-amino-acid chain: Homoserine kinase (309 aa).

ATP is bound at residue 91–101 (PIGSGLGSSAC).

Belongs to the GHMP kinase family. Homoserine kinase subfamily.

The protein resides in the cytoplasm. The catalysed reaction is L-homoserine + ATP = O-phospho-L-homoserine + ADP + H(+). Its pathway is amino-acid biosynthesis; L-threonine biosynthesis; L-threonine from L-aspartate: step 4/5. Catalyzes the ATP-dependent phosphorylation of L-homoserine to L-homoserine phosphate. This chain is Homoserine kinase, found in Salmonella agona (strain SL483).